Consider the following 119-residue polypeptide: Beta-2-microglobulin (119 aa).

The signal sequence occupies residues 1–20 (MARFVVVALLVLLSLSGLEA). An Ig-like C1-type domain is found at 25–114 (PKIQVYSRHP…VTLSTPKTVK (90 aa)). Cysteines 45 and 100 form a disulfide.

It belongs to the beta-2-microglobulin family. In terms of assembly, heterodimer of an alpha chain and a beta chain. Beta-2-microglobulin is the beta-chain of major histocompatibility complex class I molecules.

The protein resides in the secreted. In terms of biological role, component of the class I major histocompatibility complex (MHC). Involved in the presentation of peptide antigens to the immune system. The sequence is that of Beta-2-microglobulin (B2M) from Aotus azarae (Azara's night monkey).